Consider the following 547-residue polypeptide: MGNCCRSPAAAAREDVKTSHFPASTGGGKKKPHQARNGGGGGGGGGGGGWEKKRLSVLGEEGSEVNGGIEEKYALDRELGRGEFGVTYLCMDRCSRELLACKSISKRKLRTPVDVEDVRREVAIMRHLPRSASIVSLREACEDDGAVHLVMELCEGGELFDRIVARGHYTERAAAAVTRTIVEVVQLCHRHGVIHRDLKPENFLFANKKENSPLKAIDFGLSIFFKPGEKFSEIVGSPYYMAPEVLKRNYGPEIDIWSAGVILYILLCGVPPFWAETEQGVAQAILRGNIDFKREPWPNVSDNAKDLVRQMLQPDPKLRLTAKQVLEHTWLQNAKKAPNVPLGDIVKSRLKQFSRMNRFKRRALRVIADHLSAEEVEDIKDMFKVMDTDNDGIVSYEELKSGIAKFGSHLAESEVQMLIEAVDTNGRGALDYGEFLAVSLHLQRMANGEHLRRAFLFFDKDGNGYIEPEELQEALVEDGATDIMEVVKDILQEVDTDKDGKISYEEFVAMMKTGTDWRKASRHYSRGRFNSLSIRLIKDGSVKLGNE.

Residues 1–53 (MGNCCRSPAAAAREDVKTSHFPASTGGGKKKPHQARNGGGGGGGGGGGGWEKK) form a disordered region. The N-myristoyl glycine moiety is linked to residue Gly-2. Over residues 37–49 (NGGGGGGGGGGGG) the composition is skewed to gly residues. The region spanning 73–331 (YALDRELGRG…AKQVLEHTWL (259 aa)) is the Protein kinase domain. Residues 79–87 (LGRGEFGVT) and Lys-102 contribute to the ATP site. Asp-197 (proton acceptor) is an active-site residue. An autoinhibitory domain region spans residues 337–367 (APNVPLGDIVKSRLKQFSRMNRFKRRALRVI). EF-hand domains follow at residues 374–409 (EEVE…FGSH), 410–445 (LAES…LQRM), 446–481 (ANGE…DGAT), and 482–517 (DIME…GTDW). Residues Asp-387, Asp-389, Asp-391, Glu-398, Asp-423, Asn-425, Glu-434, Asp-459, Asp-461, Asn-463, Tyr-465, Glu-470, Asp-495, Asp-497, Asp-499, Lys-501, and Glu-506 each coordinate Ca(2+).

The protein belongs to the protein kinase superfamily. Ser/Thr protein kinase family. CDPK subfamily.

The protein localises to the membrane. It carries out the reaction L-seryl-[protein] + ATP = O-phospho-L-seryl-[protein] + ADP + H(+). The catalysed reaction is L-threonyl-[protein] + ATP = O-phospho-L-threonyl-[protein] + ADP + H(+). Activated by calcium. Autophosphorylation may play an important role in the regulation of the kinase activity. In terms of biological role, may play a role in signal transduction pathways that involve calcium as a second messenger. The chain is Calcium-dependent protein kinase 16 from Oryza sativa subsp. japonica (Rice).